The chain runs to 129 residues: Small ribosomal subunit protein uS11 (129 aa).

It belongs to the universal ribosomal protein uS11 family. In terms of assembly, part of the 30S ribosomal subunit. Interacts with proteins S7 and S18. Binds to IF-3.

In terms of biological role, located on the platform of the 30S subunit, it bridges several disparate RNA helices of the 16S rRNA. Forms part of the Shine-Dalgarno cleft in the 70S ribosome. The sequence is that of Small ribosomal subunit protein uS11 from Halalkalibacterium halodurans (strain ATCC BAA-125 / DSM 18197 / FERM 7344 / JCM 9153 / C-125) (Bacillus halodurans).